Reading from the N-terminus, the 159-residue chain is Ribosomal RNA large subunit methyltransferase H (159 aa).

S-adenosyl-L-methionine is bound by residues glycine 108 and 127–132; that span reads FSKMTF.

It belongs to the RNA methyltransferase RlmH family. In terms of assembly, homodimer.

The protein resides in the cytoplasm. The catalysed reaction is pseudouridine(1915) in 23S rRNA + S-adenosyl-L-methionine = N(3)-methylpseudouridine(1915) in 23S rRNA + S-adenosyl-L-homocysteine + H(+). Specifically methylates the pseudouridine at position 1915 (m3Psi1915) in 23S rRNA. The sequence is that of Ribosomal RNA large subunit methyltransferase H from Clostridium perfringens (strain ATCC 13124 / DSM 756 / JCM 1290 / NCIMB 6125 / NCTC 8237 / Type A).